The chain runs to 2508 residues: Male gametocyte surface protein P230p (2508 aa).

Positions 1–34 (MFIYLFIYLFFKMDKKRTFYYLFFFFTFLVYVLY) are cleaved as a signal peptide. Residues asparagine 230, asparagine 254, asparagine 362, and asparagine 414 are each glycosylated (N-linked (GlcNAc...) asparagine). The 123-residue stretch at 394-516 (KILGLSTNEK…GLGETSVDKD (123 aa)) folds into the 6-Cys 1 domain. A disulfide bridge connects residues cysteine 443 and cysteine 493. 2 N-linked (GlcNAc...) asparagine glycosylation sites follow: asparagine 601 and asparagine 674. 5 consecutive 6-Cys domains span residues 676–800 (SVSF…IVKR), 831–1096 (ITYL…LKSF), 1099–1231 (PIEG…LELN), 1268–1428 (KKHI…IPQH), and 1433–1565 (KFYG…NEDI). A disulfide bridge links cysteine 680 with cysteine 700. Residue asparagine 703 is glycosylated (N-linked (GlcNAc...) asparagine). 2 disulfides stabilise this stretch: cysteine 714–cysteine 775 and cysteine 725–cysteine 773. N-linked (GlcNAc...) asparagine glycans are attached at residues asparagine 779, asparagine 849, asparagine 986, asparagine 995, asparagine 1065, and asparagine 1074. Cystine bridges form between cysteine 835/cysteine 856 and cysteine 871/cysteine 1072. 3 cysteine pairs are disulfide-bonded: cysteine 1103/cysteine 1129, cysteine 1144/cysteine 1206, and cysteine 1157/cysteine 1204. N-linked (GlcNAc...) asparagine glycosylation is present at asparagine 1231. 5 disulfides stabilise this stretch: cysteine 1272/cysteine 1293, cysteine 1308/cysteine 1404, cysteine 1437/cysteine 1464, cysteine 1478/cysteine 1547, and cysteine 1488/cysteine 1545. N-linked (GlcNAc...) asparagine glycosylation occurs at asparagine 1385. N-linked (GlcNAc...) asparagine glycans are attached at residues asparagine 1525, asparagine 1550, asparagine 1567, asparagine 1750, asparagine 1755, and asparagine 1788. 6-Cys domains are found at residues 1656-1804 (KKKI…IKKN) and 1807-1984 (KILG…IVGD). A disulfide bond links cysteine 1704 and cysteine 1782. Disulfide bonds link cysteine 1811/cysteine 1883, cysteine 1897/cysteine 1966, and cysteine 1908/cysteine 1964. N-linked (GlcNAc...) asparagine glycosylation is found at asparagine 2016 and asparagine 2047. Residues 2081-2113 (SDEGDGYQADEDIGGEDDAEDVDGEGDDEDDNI) are disordered. Over residues 2082–2112 (DEGDGYQADEDIGGEDDAEDVDGEGDDEDDN) the composition is skewed to acidic residues. Residues asparagine 2143, asparagine 2211, asparagine 2239, and asparagine 2255 are each glycosylated (N-linked (GlcNAc...) asparagine). 6-Cys domains lie at 2197-2354 (IINI…VKSN) and 2357-2481 (KIYG…YEPY). 3 disulfide bridges follow: cysteine 2361–cysteine 2386, cysteine 2400–cysteine 2461, and cysteine 2411–cysteine 2459.

Its subcellular location is the cell surface. It localises to the cell membrane. Functionally, plays an essential role in male gamete fertility. Required for the binding to erythrocytes and thus, for the formation of exflagellation centers. The chain is Male gametocyte surface protein P230p (PFS230P) from Plasmodium falciparum (isolate 3D7).